A 341-amino-acid polypeptide reads, in one-letter code: Hyaluronan and proteoglycan link protein 2 (341 aa).

The signal sequence occupies residues 1–27; it reads MPSRIPLPAFCCFLLPWAFTSFHKALG. Residues 35–143 form the Ig-like V-type domain; that stretch reads PHYLLPPIHE…GIEDESVALT (109 aa). Cystine bridges form between Cys-58/Cys-129, Cys-171/Cys-241, Cys-195/Cys-216, Cys-266/Cys-337, and Cys-291/Cys-312. Link domains are found at residues 149 to 243 and 246 to 339; these read VVFP…FCFT and LAGQ…YCYA.

The protein belongs to the HAPLN family. In terms of tissue distribution, brain. Predominantly expressed by neurons. Colocalizes with versican V2 in developing and adult cerebellar white matter and at the nodes of Ranvier.

It localises to the secreted. Its subcellular location is the extracellular space. It is found in the extracellular matrix. Its function is as follows. Mediates a firm binding of versican V2 to hyaluronic acid. May play a pivotal role in the formation of the hyaluronan-associated matrix in the central nervous system (CNS) which facilitates neuronal conduction and general structural stabilization. Binds to hyaluronic acid. The polypeptide is Hyaluronan and proteoglycan link protein 2 (Hapln2) (Mus musculus (Mouse)).